Reading from the N-terminus, the 358-residue chain is Peptide chain release factor 1 (358 aa).

Gln237 bears the N5-methylglutamine mark.

Belongs to the prokaryotic/mitochondrial release factor family. Post-translationally, methylated by PrmC. Methylation increases the termination efficiency of RF1.

Its subcellular location is the cytoplasm. Its function is as follows. Peptide chain release factor 1 directs the termination of translation in response to the peptide chain termination codons UAG and UAA. This chain is Peptide chain release factor 1, found in Streptomyces griseus subsp. griseus (strain JCM 4626 / CBS 651.72 / NBRC 13350 / KCC S-0626 / ISP 5235).